A 348-amino-acid polypeptide reads, in one-letter code: MILLQNIKRCSLKQLKVLATLLLSLSLPTLEAAENRDSDSIVWHLDYQEALQKSKEAELPLLVIFSGSDWNGPCMKIRKEVLESPEFIKRVQGKFVCVEVEYLKHRPQVENIRQQNLALKSKFKINELPCMILLSHEEREIYRIGSFGNETGSNLGDSLCHIVESDSLLRRAFPMMTSLSLSELQRYYRLAEELSHKEFLKHALELGVRSDDYFFLSEKFRLLVEVGKMDSEECQRIKKRLLNKDPKNEKQTHFTVALIEFQELAKRSRAGVRQDASQVIAPLESYISQFGQQDKDNLWRVEMMIAQFYLDSDQWHHALQHAEVAFEAAPNEVRSHISRSLEYIRHQS.

An N-terminal signal peptide occupies residues 1–32 (MILLQNIKRCSLKQLKVLATLLLSLSLPTLEA).

It is found in the periplasm. This chain is Thioredoxin-related protein DsbJ (dsbJ), found in Chlamydia pneumoniae (Chlamydophila pneumoniae).